Reading from the N-terminus, the 122-residue chain is Probable DNA-directed RNA polymerase II subunit RPB11 (122 aa).

The protein belongs to the archaeal Rpo11/eukaryotic RPB11/RPC19 RNA polymerase subunit family. As to quaternary structure, component of the RNA polymerase II (Pol II) complex consisting of 12 subunits.

The protein resides in the nucleus. In terms of biological role, DNA-dependent RNA polymerase catalyzes the transcription of DNA into RNA using the four ribonucleoside triphosphates as substrates. Component of RNA polymerase II which synthesizes mRNA precursors and many functional non-coding RNAs. Pol II is the central component of the basal RNA polymerase II transcription machinery. It is composed of mobile elements that move relative to each other. RPB11 is part of the core element with the central large cleft. The polypeptide is Probable DNA-directed RNA polymerase II subunit RPB11 (rpb-11) (Caenorhabditis briggsae).